Reading from the N-terminus, the 191-residue chain is Chorion class B protein Ld34 (191 aa).

A signal peptide spans 1–21 (MSAKIILVFCAQALFVQSALS).

It belongs to the chorion protein family.

Functionally, this protein is one of many from the eggshell of the gypsy moth. The protein is Chorion class B protein Ld34 of Lymantria dispar (Gypsy moth).